Reading from the N-terminus, the 320-residue chain is Olfactory receptor 10J1 (320 aa).

Topologically, residues 1–36 are extracellular; the sequence is MLLCFRFGNQSMKRENFTLITDFVFQGFSSFHEQQI. Residues Asn9 and Asn16 are each glycosylated (N-linked (GlcNAc...) asparagine). The chain crosses the membrane as a helical span at residues 37–57; the sequence is TLFGVFLALYILTLAGNIIIV. The Cytoplasmic portion of the chain corresponds to 58–65; it reads TIIRMDLH. A helical transmembrane segment spans residues 66–86; that stretch reads LHTPMYFFLSMLSTSETVYTL. At 87–110 the chain is on the extracellular side; it reads VILPRMLSSLVGMSQPISLAGCAT. Cys108 and Cys199 are joined by a disulfide. The helical transmembrane segment at 111–131 threads the bilayer; sequence QMFFFVTFGITNCFLLTAMGY. Residues 132–150 lie on the Cytoplasmic side of the membrane; it reads DRYVAICNPLRYMVIMNKR. Residues 151-171 form a helical membrane-spanning segment; the sequence is LRIQLVLGACSIGLIVAITQV. At 172–207 the chain is on the extracellular side; that stretch reads TSVFRLPFCARKVPHFFCDIRPVMKLSCIDTTVNEI. A helical membrane pass occupies residues 208–227; the sequence is LTLIISVLVLVVPMGLVFIS. Residues 228-247 are Cytoplasmic-facing; the sequence is YVLIISTILKIASVEGRKKA. The chain crosses the membrane as a helical span at residues 248–268; it reads FATCASHLTVVIVHYSCASIA. The Extracellular portion of the chain corresponds to 269–281; sequence YLKPKSENTREHD. Residues 282–302 form a helical membrane-spanning segment; it reads QLISVTYTVITPLLNPVVYTL. At 303-320 the chain is on the cytoplasmic side; that stretch reads RNKEVKDALCRAVGGKFS.

It belongs to the G-protein coupled receptor 1 family.

It is found in the cell membrane. Its function is as follows. Odorant receptor. The chain is Olfactory receptor 10J1 (OR10J1) from Homo sapiens (Human).